The sequence spans 570 residues: MPYKISRAAYAGMFGPTTGDKVRLADTELFIEIEKDFTTYGEEVKFGGGKVIRDGMGQSQVTRADGAVDTVITNAVIVDHSGVYKADIGLKDGRIVAIGKAGNPDMQPGVNIIVGPGTEAIAAEGKIVTAGGMDSHIHFIAPQQIEEALMSGMTCMLGGGTGPAHGTLATTCTPGPWHLARMIEAADAFPMNLAFAGKGNASLPGALTEMVLAGATSLKLHEDWGTTPGAIDCCLSVADEYDVQVMIHTDTLNESGFVEDTIGAIKGRTIHAFHTEGAGGGHAPDIIKICGQPNVIPSSTNPTRPYTVNTIAEHLDMLMVCHHLSPSIPEDIAFAESRIRKETIAAEDILHDIGAFSIISSDSQAMGRVGEVAIRTWQTADKMKRQRGRLKQENGDNDNFRVRRYIAKYTINPAIAHGLSHEIGSVEVGKRADLVLWNPAFFGVKPDMVLLGGSIAAAPMGDPNASIPTPQPVHYRPMFASYGRSLTNSSVTFVSQASLDAGLKGRLGVAKQLVAVKNTRGGISKASMIHNDLTPEIEVDPETYEVRANGELLTCEPATVLPMAQRYFLF.

One can recognise a Urease domain in the interval 131–570 (GGMDSHIHFI…LPMAQRYFLF (440 aa)). Residues His-136, His-138, and Lys-219 each coordinate Ni(2+). Lys-219 carries the post-translational modification N6-carboxylysine. His-221 is a substrate binding site. Residues His-248 and His-274 each contribute to the Ni(2+) site. Catalysis depends on His-322, which acts as the Proton donor. Residue Asp-362 participates in Ni(2+) binding.

The protein belongs to the metallo-dependent hydrolases superfamily. Urease alpha subunit family. As to quaternary structure, heterotrimer of UreA (gamma), UreB (beta) and UreC (alpha) subunits. Three heterotrimers associate to form the active enzyme. It depends on Ni cation as a cofactor. In terms of processing, carboxylation allows a single lysine to coordinate two nickel ions.

It localises to the cytoplasm. The catalysed reaction is urea + 2 H2O + H(+) = hydrogencarbonate + 2 NH4(+). The protein operates within nitrogen metabolism; urea degradation; CO(2) and NH(3) from urea (urease route): step 1/1. The chain is Urease subunit alpha from Rhizobium leguminosarum bv. trifolii (strain WSM2304).